Consider the following 293-residue polypeptide: Neugrin (293 aa).

The first 18 residues, 1-18, serve as a signal peptide directing secretion; the sequence is MALSLSLFLGGRVRTSLA. Phosphoserine is present on Ser-41. Disordered stretches follow at residues 177-210 and 224-254; these read DEVSSKSQNHSTALKVAKSHPHSTDAQKKREGRD and TTALGHQRELQKSATSDSEATGRAGSDTLPS. Asn-185 carries N-linked (GlcNAc...) asparagine glycosylation. Residues 198-210 are compositionally biased toward basic and acidic residues; it reads HSTDAQKKREGRD.

It belongs to the neugrin family. In terms of assembly, forms a regulatory protein-RNA complex, consisting of RCC1L, NGRN, RPUSD3, RPUSD4, TRUB2, FASTKD2 and 16S mt-rRNA. Interacts with 16S mt-rRNA; this interaction is direct. As to expression, expressed in heart, brain, liver and kidney. In brain, mainly expressed in neurons rather than glial cells.

It localises to the nucleus. It is found in the secreted. The protein localises to the mitochondrion membrane. Functionally, plays an essential role in mitochondrial ribosome biogenesis. As a component of a functional protein-RNA module, consisting of RCC1L, NGRN, RPUSD3, RPUSD4, TRUB2, FASTKD2 and 16S mitochondrial ribosomal RNA (16S mt-rRNA), controls 16S mt-rRNA abundance and is required for intra-mitochondrial translation of core subunits of the oxidative phosphorylation system. This Mus musculus (Mouse) protein is Neugrin (Ngrn).